The chain runs to 189 residues: Elongation factor P (189 aa).

Belongs to the elongation factor P family.

The protein localises to the cytoplasm. It participates in protein biosynthesis; polypeptide chain elongation. In terms of biological role, involved in peptide bond synthesis. Stimulates efficient translation and peptide-bond synthesis on native or reconstituted 70S ribosomes in vitro. Probably functions indirectly by altering the affinity of the ribosome for aminoacyl-tRNA, thus increasing their reactivity as acceptors for peptidyl transferase. This is Elongation factor P from Campylobacter fetus subsp. fetus (strain 82-40).